We begin with the raw amino-acid sequence, 83 residues long: Hainantoxin-III 2 (83 aa).

The first 21 residues, 1-21, serve as a signal peptide directing secretion; the sequence is MKASMYLALAGLVLLFVVGYA. Residues 22 to 48 constitute a propeptide that is removed on maturation; sequence SESEEKEFPRELLSKIFAVDDFKGEER. 3 disulfides stabilise this stretch: cysteine 50–cysteine 65, cysteine 57–cysteine 70, and cysteine 64–cysteine 77. Leucine amide is present on leucine 81.

Belongs to the neurotoxin 10 (Hwtx-1) family. 15 (Hntx-3) subfamily. Monomer. As to expression, expressed by the venom gland.

The protein resides in the secreted. Functionally, selective antagonist of neuronal tetrodotoxin (TTX)-sensitive voltage-gated sodium channels (IC(50)=1270 nM on Nav1.1/SCN1A, 270 nM on Nav1.2/SCN2A, 491 nM on Nav1.3/SCN3A and 232 nM on Nav1.7/SCN9A). This toxin suppress Nav1.7 current amplitude without significantly altering the activation, inactivation, and repriming kinetics. Short extreme depolarizations partially activate the toxin-bound channel, indicating voltage-dependent inhibition of this toxin. This toxin increases the deactivation of the Nav1.7 current after extreme depolarizations. The toxin-Nav1.7 complex is gradually dissociated upon prolonged strong depolarizations in a voltage-dependent manner, and the unbound toxin rebinds to Nav1.7 after a long repolarization. Moreover, analysis of chimeric channels showed that the DIIS3-S4 linker is critical for toxin binding to Nav1.7. These data are consistent with this toxin interacting with Nav1.7 site 4 and trapping the domain II voltage sensor in the closed state. This Cyriopagopus hainanus (Chinese bird spider) protein is Hainantoxin-III 2.